Here is a 254-residue protein sequence, read N- to C-terminus: Dihydroorotate dehydrogenase B (NAD(+)), electron transfer subunit (254 aa).

The FAD-binding FR-type domain occupies 1 to 99; it reads MLQTEMKVIQ…LGPLGKGFDL (99 aa). Residues 50 to 53, 67 to 69, and 74 to 75 contribute to the FAD site; these read RPIS, LYR, and GT. [2Fe-2S] cluster is bound by residues cysteine 218, cysteine 223, cysteine 226, and cysteine 241.

This sequence belongs to the PyrK family. Heterotetramer of 2 PyrK and 2 PyrD type B subunits. [2Fe-2S] cluster serves as cofactor. Requires FAD as cofactor.

It participates in pyrimidine metabolism; UMP biosynthesis via de novo pathway; orotate from (S)-dihydroorotate (NAD(+) route): step 1/1. Functionally, responsible for channeling the electrons from the oxidation of dihydroorotate from the FMN redox center in the PyrD type B subunit to the ultimate electron acceptor NAD(+). The polypeptide is Dihydroorotate dehydrogenase B (NAD(+)), electron transfer subunit (Listeria innocua serovar 6a (strain ATCC BAA-680 / CLIP 11262)).